We begin with the raw amino-acid sequence, 236 residues long: MTINALLLSSSRVGDTPYLAHAIPFIKPLTTQAQKWIFIPYAGVSMSYDTYLASVVMGLAELNLDISGIHQHPDPCQAIKDADGILIGGGNTFHLLHELYRYNLINLIREKVAQGTPYVGWSAGANVSGASIKTTNDMPIIEPPSFDALKIVPFQLNPHYSNYRTPGHNGETRAQRLLEFTKVEPLTPVIAIAEGSALWRRDNTLVLLGENPAYLFCGEQQEMLIPIGSDLSHLLK.

Residues S122, D137, and H159 each act as charge relay system in the active site.

It belongs to the peptidase S51 family.

It localises to the cytoplasm. It carries out the reaction Dipeptidase E catalyzes the hydrolysis of dipeptides Asp-|-Xaa. It does not act on peptides with N-terminal Glu, Asn or Gln, nor does it cleave isoaspartyl peptides.. Its function is as follows. Hydrolyzes dipeptides containing N-terminal aspartate residues. May play a role in allowing the cell to use peptide aspartate to spare carbon otherwise required for the synthesis of the aspartate family of amino acids. This chain is Peptidase E, found in Shewanella putrefaciens (strain CN-32 / ATCC BAA-453).